The chain runs to 284 residues: Bifunctional protein FolD (284 aa).

Residues 166–168 (GAS), S191, and I232 each bind NADP(+).

The protein belongs to the tetrahydrofolate dehydrogenase/cyclohydrolase family. Homodimer.

The catalysed reaction is (6R)-5,10-methylene-5,6,7,8-tetrahydrofolate + NADP(+) = (6R)-5,10-methenyltetrahydrofolate + NADPH. It catalyses the reaction (6R)-5,10-methenyltetrahydrofolate + H2O = (6R)-10-formyltetrahydrofolate + H(+). Its pathway is one-carbon metabolism; tetrahydrofolate interconversion. Catalyzes the oxidation of 5,10-methylenetetrahydrofolate to 5,10-methenyltetrahydrofolate and then the hydrolysis of 5,10-methenyltetrahydrofolate to 10-formyltetrahydrofolate. The chain is Bifunctional protein FolD from Neisseria meningitidis serogroup C (strain 053442).